The chain runs to 280 residues: Dual adapter for phosphotyrosine and 3-phosphotyrosine and 3-phosphoinositide (280 aa).

One can recognise an SH2 domain in the interval 35–129; sequence WYHGNLTRHA…GTLMVLKHPY (95 aa). Tyr139 bears the Phosphotyrosine mark. Ser141 carries the post-translational modification Phosphoserine. A PH domain is found at 164 to 259; that stretch reads LGTKEGYLTK…WIKILRWKLS (96 aa).

In terms of assembly, interacts with PtdIns(3,4,5)P3 and PLCG2. Post-translationally, phosphorylated on tyrosine residues.

Its subcellular location is the cytoplasm. The protein resides in the membrane. In terms of biological role, may act as a B-cell-associated adapter that regulates B-cell antigen receptor (BCR)-signaling downstream of PI3K. The sequence is that of Dual adapter for phosphotyrosine and 3-phosphotyrosine and 3-phosphoinositide (Dapp1) from Mus musculus (Mouse).